The following is a 640-amino-acid chain: Threonine--tRNA ligase (640 aa).

The TGS domain maps to 1–61 (MPTITLPDGS…ENDASLQIIT (61 aa)). The tract at residues 242–533 (DHRKIGKRLG…LIEHYEGAFP (292 aa)) is catalytic. Positions 333, 384, and 510 each coordinate Zn(2+).

Belongs to the class-II aminoacyl-tRNA synthetase family. In terms of assembly, homodimer. Zn(2+) serves as cofactor.

It localises to the cytoplasm. It catalyses the reaction tRNA(Thr) + L-threonine + ATP = L-threonyl-tRNA(Thr) + AMP + diphosphate + H(+). In terms of biological role, catalyzes the attachment of threonine to tRNA(Thr) in a two-step reaction: L-threonine is first activated by ATP to form Thr-AMP and then transferred to the acceptor end of tRNA(Thr). Also edits incorrectly charged L-seryl-tRNA(Thr). In Pseudomonas syringae pv. tomato (strain ATCC BAA-871 / DC3000), this protein is Threonine--tRNA ligase.